The sequence spans 518 residues: DNA-(apurinic or apyrimidinic site) endonuclease 2 (518 aa).

Mg(2+) is bound by residues Asn-8 and Glu-48. Tyr-156 is an active-site residue. 4 residues coordinate Mg(2+): Asp-197, Asn-199, Asp-303, and His-304. The active-site Proton donor/acceptor is Asp-197. His-304 acts as the Proton acceptor in catalysis. A compositionally biased stretch (polar residues) spans 355–405 (STLQHNNQTRVQTCQNKAQVRSTRPQPSQVGSSRGQKNLKSYFQPSPSCPQ). The disordered stretch occupies residues 355–407 (STLQHNNQTRVQTCQNKAQVRSTRPQPSQVGSSRGQKNLKSYFQPSPSCPQAS). Lys-371 is covalently cross-linked (Glycyl lysine isopeptide (Lys-Gly) (interchain with G-Cter in ubiquitin)). The tract at residues 390–397 (QKNLKSYF) is required for the interaction and colocalization with PCNA in nuclear foci in presence of oxidative-induced DNA damaging agents. Zn(2+) is bound by residues Cys-469, His-472, Cys-495, and Cys-509. The segment at 469–518 (CGGHREPCVMRTVKKPGPNLGRRFYMCARPRGPPTDPSSRCNFFLWSRPS) adopts a GRF-type zinc-finger fold.

This sequence belongs to the DNA repair enzymes AP/ExoA family. In terms of assembly, interacts with PCNA; this interaction is triggered by reactive oxygen species and increased by misincorporation of uracil in nuclear DNA. Mg(2+) is required as a cofactor. Mn(2+) serves as cofactor. Post-translationally, ubiquitinated by the CUL9-RBX1 complex. Ubiquitinated by MKRN3 at Lys-371 leading to proteasomal degradation. As to expression, highly expressed in brain and kidney. Weakly expressed in the fetal brain.

Its subcellular location is the nucleus. It is found in the cytoplasm. The protein resides in the mitochondrion. It catalyses the reaction Exonucleolytic cleavage in the 3'- to 5'-direction to yield nucleoside 5'-phosphates.. Its activity is regulated as follows. 3'-5' exonuclease activity is activated by sodium and manganese. 3'-5' exonuclease and 3'-phosphodiesterase activities are stimulated in presence of PCNA. Functions as a weak apurinic/apyrimidinic (AP) endodeoxyribonuclease in the DNA base excision repair (BER) pathway of DNA lesions induced by oxidative and alkylating agents. Initiates repair of AP sites in DNA by catalyzing hydrolytic incision of the phosphodiester backbone immediately adjacent to the damage, generating a single-strand break with 5'-deoxyribose phosphate and 3'-hydroxyl ends. Also displays double-stranded DNA 3'-5' exonuclease, 3'-phosphodiesterase activities. Shows robust 3'-5' exonuclease activity on 3'-recessed heteroduplex DNA and is able to remove mismatched nucleotides preferentially. Also exhibits 3'-5' exonuclease activity on a single nucleotide gap containing heteroduplex DNA and on blunt-ended substrates. Shows fairly strong 3'-phosphodiesterase activity involved in the removal of 3'-damaged termini formed in DNA by oxidative agents. In the nucleus functions in the PCNA-dependent BER pathway. Plays a role in reversing blocked 3' DNA ends, problematic lesions that preclude DNA synthesis. Required for somatic hypermutation (SHM) and DNA cleavage step of class switch recombination (CSR) of immunoglobulin genes. Required for proper cell cycle progression during proliferation of peripheral lymphocytes. The polypeptide is DNA-(apurinic or apyrimidinic site) endonuclease 2 (APEX2) (Homo sapiens (Human)).